Reading from the N-terminus, the 203-residue chain is Thymidylate kinase (203 aa).

Gly-10–Ser-17 lines the ATP pocket.

Belongs to the thymidylate kinase family.

It catalyses the reaction dTMP + ATP = dTDP + ADP. In terms of biological role, phosphorylation of dTMP to form dTDP in both de novo and salvage pathways of dTTP synthesis. The protein is Thymidylate kinase of Methylobacillus flagellatus (strain ATCC 51484 / DSM 6875 / VKM B-1610 / KT).